The primary structure comprises 245 residues: AP-1-like transcription factor YAP7 (245 aa).

Positions 1–144 are disordered; the sequence is MRQRRSVVAV…NRDAQRAYRE (144 aa). Residues 74–94 show a composition bias toward polar residues; the sequence is SANNDGSSKIKKVQTSNQKDQ. Composition is skewed to basic and acidic residues over residues 95-114 and 135-144; these read MTTK…KSDD and NRDAQRAYRE. Residues 125–188 enclose the bZIP domain; that stretch reads VDSVEKRRRQ…SDTKENLQKS (64 aa). The basic motif stretch occupies residues 130 to 149; it reads KRRRQNRDAQRAYRERRTTR. The leucine-zipper stretch occupies residues 153–181; that stretch reads LEEKVEMLHNLVDDWQRKYKLLESEFSDT.

It belongs to the bZIP family. YAP subfamily. As to quaternary structure, homodimer.

It localises to the nucleus. Probable transcription activator linked to cell cycle that induces transcription activation of genes in the environmental stress response and metabolism control pathways, like the closely related YAP5. In Saccharomyces cerevisiae (strain ATCC 204508 / S288c) (Baker's yeast), this protein is AP-1-like transcription factor YAP7 (YAP7).